Reading from the N-terminus, the 280-residue chain is PsbP domain-containing protein 7, chloroplastic (280 aa).

The N-terminal 36 residues, 1–36 (MSLKPYFSLLYSSPTNVKLSNFLIAQQPSGDLKTTP), are a transit peptide targeting the chloroplast.

Belongs to the PsbP family.

Its subcellular location is the plastid. It is found in the chloroplast. In Arabidopsis thaliana (Mouse-ear cress), this protein is PsbP domain-containing protein 7, chloroplastic (PPD7).